The sequence spans 328 residues: Tetraacyldisaccharide 4'-kinase (328 aa).

55–62 (TAGGNGKT) serves as a coordination point for ATP.

Belongs to the LpxK family.

The enzyme catalyses a lipid A disaccharide + ATP = a lipid IVA + ADP + H(+). The protein operates within glycolipid biosynthesis; lipid IV(A) biosynthesis; lipid IV(A) from (3R)-3-hydroxytetradecanoyl-[acyl-carrier-protein] and UDP-N-acetyl-alpha-D-glucosamine: step 6/6. Transfers the gamma-phosphate of ATP to the 4'-position of a tetraacyldisaccharide 1-phosphate intermediate (termed DS-1-P) to form tetraacyldisaccharide 1,4'-bis-phosphate (lipid IVA). This is Tetraacyldisaccharide 4'-kinase from Shigella boydii serotype 4 (strain Sb227).